Consider the following 397-residue polypeptide: Tyrosine--tRNA ligase (397 aa).

The short motif at 41 to 50 is the 'HIGH' region element; that stretch reads PTAPDLHLGH. Positions 225-229 match the 'KMSKS' region motif; the sequence is KMSKS. Lys-228 contacts ATP. The 57-residue stretch at 340 to 396 folds into the S4 RNA-binding domain; it reads AFLADSGLAGSRGEAKRLIKQGALSLDGEKLDDPNTPLTAGEYVVRLGKKRFLRLIV.

This sequence belongs to the class-I aminoacyl-tRNA synthetase family. TyrS type 2 subfamily. Homodimer.

It localises to the cytoplasm. The catalysed reaction is tRNA(Tyr) + L-tyrosine + ATP = L-tyrosyl-tRNA(Tyr) + AMP + diphosphate + H(+). In terms of biological role, catalyzes the attachment of tyrosine to tRNA(Tyr) in a two-step reaction: tyrosine is first activated by ATP to form Tyr-AMP and then transferred to the acceptor end of tRNA(Tyr). The polypeptide is Tyrosine--tRNA ligase (Oleidesulfovibrio alaskensis (strain ATCC BAA-1058 / DSM 17464 / G20) (Desulfovibrio alaskensis)).